A 517-amino-acid polypeptide reads, in one-letter code: Crotonobetaine/carnitine--CoA ligase (517 aa).

This sequence belongs to the ATP-dependent AMP-binding enzyme family.

It carries out the reaction 4-(trimethylamino)butanoate + ATP + CoA = 4-(trimethylamino)butanoyl-CoA + AMP + diphosphate. The enzyme catalyses crotonobetaine + ATP + CoA = crotonobetainyl-CoA + AMP + diphosphate. The catalysed reaction is (R)-carnitine + ATP + CoA = (R)-carnitinyl-CoA + AMP + diphosphate. The protein operates within amine and polyamine metabolism; carnitine metabolism. Functionally, catalyzes the transfer of CoA to carnitine, generating the initial carnitinyl-CoA needed for the CaiB reaction cycle. Also has activity toward crotonobetaine and gamma-butyrobetaine. This Shigella dysenteriae serotype 1 (strain Sd197) protein is Crotonobetaine/carnitine--CoA ligase.